We begin with the raw amino-acid sequence, 159 residues long: MNIKLITVGKLKEHYLKDGIAEYSKRIARFAKVELIEVPDEKTPEHASQAQNQQIMAKEGERIADKIGSRDYVIVLAIEGKQLPSETFSKKMSDITLSGYSTITFIIGGSLGLDERIKQRADMAISFGLLTLPHQLMRLVLIEQIYRAFMIQQGSPYHK.

Residues leucine 76, glycine 108, and 127 to 132 (FGLLTL) contribute to the S-adenosyl-L-methionine site.

The protein belongs to the RNA methyltransferase RlmH family. As to quaternary structure, homodimer.

It is found in the cytoplasm. It catalyses the reaction pseudouridine(1915) in 23S rRNA + S-adenosyl-L-methionine = N(3)-methylpseudouridine(1915) in 23S rRNA + S-adenosyl-L-homocysteine + H(+). In terms of biological role, specifically methylates the pseudouridine at position 1915 (m3Psi1915) in 23S rRNA. This Leuconostoc citreum (strain KM20) protein is Ribosomal RNA large subunit methyltransferase H.